Consider the following 406-residue polypeptide: Peptidase T (406 aa).

Position 82 (histidine 82) interacts with Zn(2+). Aspartate 84 is an active-site residue. Aspartate 142 lines the Zn(2+) pocket. The active-site Proton acceptor is glutamate 176. Residues glutamate 177, aspartate 199, and histidine 381 each contribute to the Zn(2+) site.

Belongs to the peptidase M20B family. It depends on Zn(2+) as a cofactor.

Its subcellular location is the cytoplasm. It catalyses the reaction Release of the N-terminal residue from a tripeptide.. Its function is as follows. Cleaves the N-terminal amino acid of tripeptides. In Streptococcus agalactiae serotype V (strain ATCC BAA-611 / 2603 V/R), this protein is Peptidase T.